Consider the following 270-residue polypeptide: Phosphatidylglycerol--prolipoprotein diacylglyceryl transferase (270 aa).

Helical transmembrane passes span 10–30 (VAVA…LVGI), 56–76 (LIFW…VLFY), 92–112 (WKGG…AWWF), 120–140 (FFQL…AGRI), 175–195 (SQLY…NLYA), 202–222 (MAVS…VEFV), and 237–257 (VTMG…LIWL). Arg139 serves as a coordination point for a 1,2-diacyl-sn-glycero-3-phospho-(1'-sn-glycerol).

Belongs to the Lgt family.

The protein resides in the cell inner membrane. It catalyses the reaction L-cysteinyl-[prolipoprotein] + a 1,2-diacyl-sn-glycero-3-phospho-(1'-sn-glycerol) = an S-1,2-diacyl-sn-glyceryl-L-cysteinyl-[prolipoprotein] + sn-glycerol 1-phosphate + H(+). The protein operates within protein modification; lipoprotein biosynthesis (diacylglyceryl transfer). In terms of biological role, catalyzes the transfer of the diacylglyceryl group from phosphatidylglycerol to the sulfhydryl group of the N-terminal cysteine of a prolipoprotein, the first step in the formation of mature lipoproteins. This chain is Phosphatidylglycerol--prolipoprotein diacylglyceryl transferase, found in Pseudomonas syringae pv. tomato (strain ATCC BAA-871 / DC3000).